The following is a 380-amino-acid chain: Cytochrome b (380 aa).

4 helical membrane passes run 34–54 (FGSLLGICLMTQILTGLLLAM), 78–99 (WLIRNLHANGASFFFICIYFHI), 114–134 (WNTGVVLLLTLMATAFVGYVL), and 179–199 (FFALHFLLPFMIAGLTLIHLT). 2 residues coordinate heme b: His84 and His98. His183 and His197 together coordinate heme b. His202 provides a ligand contact to a ubiquinone. 4 helical membrane passes run 227–247 (LKDILGFTLMLLPLTTLALFS), 289–309 (LGGVLALAASVLILFLIPFLH), 321–341 (LSQLLFWVLVANLLILTWVGS), and 348–368 (FIIIGQLASLTYFAILLVLFP).

Belongs to the cytochrome b family. The cytochrome bc1 complex contains 11 subunits: 3 respiratory subunits (MT-CYB, CYC1 and UQCRFS1), 2 core proteins (UQCRC1 and UQCRC2) and 6 low-molecular weight proteins (UQCRH/QCR6, UQCRB/QCR7, UQCRQ/QCR8, UQCR10/QCR9, UQCR11/QCR10 and a cleavage product of UQCRFS1). This cytochrome bc1 complex then forms a dimer. Heme b serves as cofactor.

Its subcellular location is the mitochondrion inner membrane. In terms of biological role, component of the ubiquinol-cytochrome c reductase complex (complex III or cytochrome b-c1 complex) that is part of the mitochondrial respiratory chain. The b-c1 complex mediates electron transfer from ubiquinol to cytochrome c. Contributes to the generation of a proton gradient across the mitochondrial membrane that is then used for ATP synthesis. In Halobaena caerulea (Blue petrel), this protein is Cytochrome b (MT-CYB).